We begin with the raw amino-acid sequence, 267 residues long: Oxidoreductase ordB (267 aa).

This sequence belongs to the avfA family.

It participates in mycotoxin biosynthesis. Its function is as follows. Oxidoreductase; part of the fragmented gene cluster that mediates the biosynthesis of dothistromin (DOTH), a polyketide toxin very similar in structure to the aflatoxin precursor, versicolorin B. The first step of the pathway is the conversion of acetate to norsolorinic acid (NOR) and requires the fatty acid synthase subunits hexA and hexB, as well as the polyketide synthase pksA. PksA combines a hexanoyl starter unit and 7 malonyl-CoA extender units to synthesize the precursor NOR. The hexanoyl starter unit is provided to the acyl-carrier protein (ACP) domain by the fungal fatty acid synthase hexA/hexB. The second step is the conversion of NOR to averantin (AVN) and requires the norsolorinic acid ketoreductase nor1, which catalyzes the dehydration of norsolorinic acid to form (1'S)-averantin. The cytochrome P450 monooxygenase avnA then catalyzes the hydroxylation of AVN to 5'hydroxyaverantin (HAVN). The next step is performed by adhA that transforms HAVN to averufin (AVF). Averufin might then be converted to hydroxyversicolorone by cypX and avfA. Hydroxyversicolorone is further converted versiconal hemiacetal acetate (VHA) by moxY. VHA is then the substrate for the versiconal hemiacetal acetate esterase est1 to yield versiconal (VAL). Versicolorin B synthase vbsA then converts VAL to versicolorin B (VERB) by closing the bisfuran ring. Then, the activity of the versicolorin B desaturase verB leads to versicolorin A (VERA). DotB, a predicted chloroperoxidase, may perform epoxidation of the A-ring of VERA. Alternatively, a cytochrome P450, such as cypX or avnA could catalyze this step. It is also possible that another, uncharacterized, cytochrome P450 enzyme is responsible for this step. Opening of the epoxide could potentially be achieved by the epoxide hydrolase epoA. However, epoA seems not to be required for DOTH biosynthesis, but other epoxide hydrolases may have the ability to complement this hydrolysis. Alternatively, opening of the epoxide ring could be achieved non-enzymatically. The next step is the deoxygenation of ring A to yield the 5,8-dihydroxyanthraquinone which is most likely catalyzed by the NADPH dehydrogenase encoded by ver1. The last stages of DOTH biosynthesis are proposed to involve hydroxylation of the bisfuran. OrdB and norB might have oxidative roles here. An alternative possibility is that cytochrome P450 monoogenases such as avnA and cypX might perform these steps in addition to previously proposed steps. In Dothistroma septosporum (strain NZE10 / CBS 128990) (Red band needle blight fungus), this protein is Oxidoreductase ordB.